Reading from the N-terminus, the 225-residue chain is MDQSLTQDRPLAAVFRRLGSELMPPVVETFDRSKTIFFPGDPAERVYFLLKGAVKLSRVYEAGEEITVALLRENSVFGVLSLVTGQRSDRFYHAVAFTPVELLSAPIEQVEQALKEHPDLSLLMLQGLSSRILQTEMMIETLAHRDMGSRLVSFLLILCRDFGVPAPDGIRIDLKLSHQAIAEAIGSTRVTVTRLLGDLREGNMISITKKKITVHNPVALSQQFT.

Arginine 9 to arginine 131 provides a ligand contact to a nucleoside 3',5'-cyclic phosphate. The 74-residue stretch at arginine 145–valine 218 folds into the HTH crp-type domain. The segment at residues serine 177–leucine 196 is a DNA-binding region (H-T-H motif).

Functionally, required for full expression of proteins subject to ammonium repression. Transcriptional activator of genes subject to nitrogen control. This Synechocystis sp. (strain ATCC 27184 / PCC 6803 / Kazusa) protein is Global nitrogen regulator (ntcA).